The primary structure comprises 152 residues: Arginine repressor (152 aa).

Belongs to the ArgR family.

It localises to the cytoplasm. It functions in the pathway amino-acid biosynthesis; L-arginine biosynthesis [regulation]. Functionally, regulates arginine biosynthesis genes. This Lachnoclostridium phytofermentans (strain ATCC 700394 / DSM 18823 / ISDg) (Clostridium phytofermentans) protein is Arginine repressor.